The chain runs to 272 residues: Diaminopimelate epimerase (272 aa).

2 residues coordinate substrate: Asn-11 and Asn-63. Cys-72 acts as the Proton donor in catalysis. Residues 73–74 (GN), Asn-190, and 208–209 (ER) each bind substrate. Catalysis depends on Cys-217, which acts as the Proton acceptor. Substrate is bound at residue 218-219 (GT).

The protein belongs to the diaminopimelate epimerase family. Homodimer.

The protein resides in the cytoplasm. The catalysed reaction is (2S,6S)-2,6-diaminopimelate = meso-2,6-diaminopimelate. It functions in the pathway amino-acid biosynthesis; L-lysine biosynthesis via DAP pathway; DL-2,6-diaminopimelate from LL-2,6-diaminopimelate: step 1/1. Its function is as follows. Catalyzes the stereoinversion of LL-2,6-diaminopimelate (L,L-DAP) to meso-diaminopimelate (meso-DAP), a precursor of L-lysine and an essential component of the bacterial peptidoglycan. The protein is Diaminopimelate epimerase of Clostridium perfringens (strain 13 / Type A).